The chain runs to 196 residues: MPIGVPKVPFRSPGEEDASWVDVYNRLYRERLLFLGQEVDSEISNQLIGLMVYLSIENDNKDLYLFINSPGGWVIPGVAIYDTMQFVQPDVHTICMGLAASMGSFVLVGGEITKRLAFPHARVMIHQPASSFYEAQTGEFILEAEELLKLRETITRVYVQRTGKPLWVVSEDMERDVFMSATEAQAHGIVDLVAIE.

Catalysis depends on S101, which acts as the Nucleophile. H126 is a catalytic residue.

Belongs to the peptidase S14 family. In terms of assembly, component of the chloroplastic Clp protease core complex.

It localises to the plastid. It is found in the chloroplast stroma. The catalysed reaction is Hydrolysis of proteins to small peptides in the presence of ATP and magnesium. alpha-casein is the usual test substrate. In the absence of ATP, only oligopeptides shorter than five residues are hydrolyzed (such as succinyl-Leu-Tyr-|-NHMec, and Leu-Tyr-Leu-|-Tyr-Trp, in which cleavage of the -Tyr-|-Leu- and -Tyr-|-Trp bonds also occurs).. Its function is as follows. Cleaves peptides in various proteins in a process that requires ATP hydrolysis. Has a chymotrypsin-like activity. Plays a major role in the degradation of misfolded proteins. This Eucalyptus globulus subsp. globulus (Tasmanian blue gum) protein is ATP-dependent Clp protease proteolytic subunit.